The sequence spans 469 residues: Neuraminidase (469 aa).

Residues 1 to 9 are Intravirion-facing; sequence MNPNQKIIT. Residues 10-30 form a helical membrane-spanning segment; the sequence is IGSVSLTIATICFLMQIAILV. Residues 11 to 33 are involved in apical transport and lipid raft association; that stretch reads GSVSLTIATICFLMQIAILVTTV. Topologically, residues 31-469 are virion surface; it reads TTVTLHFKQY…DGADINLMPI (439 aa). The hypervariable stalk region stretch occupies residues 36 to 88; that stretch reads HFKQYECSSPPNNQVMPCEPIIIERNITEIVYLTNTTIDKEICPKLVEYRNWS. N-linked (GlcNAc...) asparagine; by host glycans are attached at residues Asn61, Asn70, and Asn86. A head of neuraminidase region spans residues 91–469; that stretch reads QCKITGFAPF…DGADINLMPI (379 aa). 8 disulfide bridges follow: Cys92/Cys417, Cys124/Cys129, Cys183/Cys230, Cys232/Cys237, Cys278/Cys291, Cys280/Cys289, Cys318/Cys337, and Cys421/Cys447. Position 118 (Arg118) interacts with substrate. The N-linked (GlcNAc...) asparagine; by host glycan is linked to Asn146. Residue Asp151 is the Proton donor/acceptor of the active site. A substrate-binding site is contributed by Arg152. Residues Asn200 and Asn234 are each glycosylated (N-linked (GlcNAc...) asparagine; by host). Residue 276–277 participates in substrate binding; the sequence is EE. Arg292 serves as a coordination point for substrate. Asp293, Gly297, and Asp324 together coordinate Ca(2+). Residue Arg371 coordinates substrate. N-linked (GlcNAc...) asparagine; by host glycosylation occurs at Asn402. Catalysis depends on Tyr406, which acts as the Nucleophile.

This sequence belongs to the glycosyl hydrolase 34 family. As to quaternary structure, homotetramer. It depends on Ca(2+) as a cofactor. N-glycosylated.

It is found in the virion membrane. Its subcellular location is the host apical cell membrane. The catalysed reaction is Hydrolysis of alpha-(2-&gt;3)-, alpha-(2-&gt;6)-, alpha-(2-&gt;8)- glycosidic linkages of terminal sialic acid residues in oligosaccharides, glycoproteins, glycolipids, colominic acid and synthetic substrates.. Inhibited by the neuraminidase inhibitors zanamivir (Relenza) and oseltamivir (Tamiflu). These drugs interfere with the release of progeny virus from infected cells and are effective against all influenza strains. Resistance to neuraminidase inhibitors is quite rare. Catalyzes the removal of terminal sialic acid residues from viral and cellular glycoconjugates. Cleaves off the terminal sialic acids on the glycosylated HA during virus budding to facilitate virus release. Additionally helps virus spread through the circulation by further removing sialic acids from the cell surface. These cleavages prevent self-aggregation and ensure the efficient spread of the progeny virus from cell to cell. Otherwise, infection would be limited to one round of replication. Described as a receptor-destroying enzyme because it cleaves a terminal sialic acid from the cellular receptors. May facilitate viral invasion of the upper airways by cleaving the sialic acid moieties on the mucin of the airway epithelial cells. Likely to plays a role in the budding process through its association with lipid rafts during intracellular transport. May additionally display a raft-association independent effect on budding. Plays a role in the determination of host range restriction on replication and virulence. Sialidase activity in late endosome/lysosome traffic seems to enhance virus replication. This Aves (whales) protein is Neuraminidase.